A 604-amino-acid chain; its full sequence is Serine protease 56 (604 aa).

The first 22 residues, M1–G22, serve as a signal peptide directing secretion. Residues C70–E94 form a disordered region. Over residues R75 to P89 the composition is skewed to pro residues. N101 is a glycosylation site (N-linked (GlcNAc...) asparagine). In terms of domain architecture, Peptidase S1 spans I109 to S341. Residues C134 and C150 are joined by a disulfide bond. Active-site charge relay system residues include H149 and D195. 3 cysteine pairs are disulfide-bonded: C229–C296, C260–C275, and C286–C317. S290 serves as the catalytic Charge relay system. Disordered stretches follow at residues R424 to Q452 and P578 to P604.

It belongs to the peptidase S1 family. As to expression, expressed in the eye: present in the retina and in the optic nerve.

It is found in the endoplasmic reticulum membrane. In terms of biological role, serine protease required during eye development. This Mus musculus (Mouse) protein is Serine protease 56 (Prss56).